Consider the following 233-residue polypeptide: ATP-dependent dethiobiotin synthetase BioD (233 aa).

An ATP-binding site is contributed by 12–17 (GVGKTI). Thr16 lines the Mg(2+) pocket. Lys37 is a catalytic residue. Ser41 provides a ligand contact to substrate. Residues Asp51, 112–115 (EGAG), and 202–204 (PKL) contribute to the ATP site. Residues Asp51 and Glu112 each coordinate Mg(2+).

It belongs to the dethiobiotin synthetase family. As to quaternary structure, homodimer. Requires Mg(2+) as cofactor.

The protein resides in the cytoplasm. It carries out the reaction (7R,8S)-7,8-diammoniononanoate + CO2 + ATP = (4R,5S)-dethiobiotin + ADP + phosphate + 3 H(+). It participates in cofactor biosynthesis; biotin biosynthesis; biotin from 7,8-diaminononanoate: step 1/2. Functionally, catalyzes a mechanistically unusual reaction, the ATP-dependent insertion of CO2 between the N7 and N8 nitrogen atoms of 7,8-diaminopelargonic acid (DAPA, also called 7,8-diammoniononanoate) to form a ureido ring. This Bacillus velezensis (strain DSM 23117 / BGSC 10A6 / LMG 26770 / FZB42) (Bacillus amyloliquefaciens subsp. plantarum) protein is ATP-dependent dethiobiotin synthetase BioD.